The primary structure comprises 522 residues: Putative malate dehydrogenase 1B (522 aa).

The tract at residues 495–522 is disordered; it reads EETEKSSSEDTPEAAAAAVSTGDETVPS.

This sequence belongs to the LDH/MDH superfamily. MDH type 2 family.

In Branchiostoma floridae (Florida lancelet), this protein is Putative malate dehydrogenase 1B (MDH1B).